A 301-amino-acid chain; its full sequence is Probable alpha-L-glutamate ligase (301 aa).

Positions 104–287 constitute an ATP-grasp domain; the sequence is MQLLSRKGIG…VAGLIIDFIE (184 aa). ATP contacts are provided by residues lysine 141, 178-179, aspartate 187, and 211-213; these read EF and RSN. Positions 248, 260, and 262 each coordinate Mg(2+). Positions 248, 260, and 262 each coordinate Mn(2+).

It belongs to the RimK family. Requires Mg(2+) as cofactor. The cofactor is Mn(2+).

This chain is Probable alpha-L-glutamate ligase, found in Aliivibrio fischeri (strain MJ11) (Vibrio fischeri).